The following is a 173-amino-acid chain: Co-chaperone protein HscB homolog (173 aa).

In terms of domain architecture, J spans 5–77 (CHYALFDLQP…PRRARYLLAI (73 aa)).

It belongs to the HscB family. In terms of assembly, interacts with HscA and stimulates its ATPase activity.

Its function is as follows. Co-chaperone involved in the maturation of iron-sulfur cluster-containing proteins. Seems to help targeting proteins to be folded toward HscA. The sequence is that of Co-chaperone protein HscB homolog from Pseudomonas entomophila (strain L48).